The chain runs to 458 residues: Forkhead box protein J1-A (458 aa).

The segment covering 68 to 78 (TGQHTSPSSHS) has biased composition (polar residues). The segment at 68–99 (TGQHTSPSSHSHLMGSDAPSSPLAGDPASIGM) is disordered. The segment at residues 142-236 (KPPYSYATLI…LNGAYKKRRL (95 aa)) is a DNA-binding region (fork-head). Positions 305 to 321 (TNKRKQPYNHRTGKTPR) are enriched in basic residues. The tract at residues 305-324 (TNKRKQPYNHRTGKTPRRSS) is disordered.

Belongs to the FOXJ1 family. In terms of tissue distribution, expressed in floor plate, dorsal forerunner cells, Kupffers vesicle, the floor plate, pronephric ducts and kidney.

The protein resides in the nucleus. Key transcription factor required for motile ciliogenesis. Activates genes essential for motile cilia formation and function. Its activity is sufficient for ectopic development of cilia that resemble motile cilia. In Danio rerio (Zebrafish), this protein is Forkhead box protein J1-A.